We begin with the raw amino-acid sequence, 208 residues long: CASP-like protein 3A1 (208 aa).

Composition is skewed to polar residues over residues 1-11 (MGSFANGQNGS) and 17-33 (TPAT…TTSA). Positions 1–33 (MGSFANGQNGSELGIQTPATGSNAALEPPTTSA) are disordered. Residues 1 to 43 (MGSFANGQNGSELGIQTPATGSNAALEPPTTSAAAPRCPRLGM) are Cytoplasmic-facing. A helical membrane pass occupies residues 44–64 (AMVAARAAALVMALLSVSLMV). Residues 65-92 (SAKQRGTLAIFGIEIPLYAKWSLSDSLQ) are Extracellular-facing. The helical transmembrane segment at 93–113 (SLVGISAAAAAYSLAQLLSIA) threads the bilayer. The Cytoplasmic segment spans residues 114–128 (HTALKKAPVVPSRRY). The chain crosses the membrane as a helical span at residues 129 to 149 (AWMLLAGDQVFAYAMLSAGSA). Topologically, residues 150–183 (AAAVANLNRTGVRHTALPNFCKPLPRFCDLSAAS) are extracellular. An N-linked (GlcNAc...) asparagine glycan is attached at N157. A helical membrane pass occupies residues 184–204 (IACAFLGCAFLAASAVIDVIW). Residues 205-208 (LSRL) are Cytoplasmic-facing.

Belongs to the Casparian strip membrane proteins (CASP) family. As to quaternary structure, homodimer and heterodimers.

It is found in the cell membrane. This Hordeum vulgare subsp. vulgare (Domesticated barley) protein is CASP-like protein 3A1.